A 117-amino-acid polypeptide reads, in one-letter code: MTRIRRGYIARRRRTKMRLFVSSFRGAHSRLSRTITQQKIRALVSAHRDRDRKKRDFRRLWITRINAVIRGNLVSYSYSRLIYNLYKAQLVLNRKILAQIAISNRNCLYMISNEIIK.

The protein belongs to the bacterial ribosomal protein bL20 family.

It localises to the plastid. It is found in the chloroplast. In terms of biological role, binds directly to 23S ribosomal RNA and is necessary for the in vitro assembly process of the 50S ribosomal subunit. It is not involved in the protein synthesizing functions of that subunit. The protein is Large ribosomal subunit protein bL20c of Citrus sinensis (Sweet orange).